The following is a 371-amino-acid chain: tRNA-specific 2-thiouridylase MnmA (371 aa).

ATP contacts are provided by residues 22–29 (GLSGGVDS) and methionine 48. An interaction with target base in tRNA region spans residues 108 to 110 (NPD). Catalysis depends on cysteine 113, which acts as the Nucleophile. The cysteines at positions 113 and 209 are disulfide-linked. Residue glycine 137 participates in ATP binding. Residues 159-161 (KDQ) form an interaction with tRNA region. Cysteine 209 functions as the Cysteine persulfide intermediate in the catalytic mechanism.

The protein belongs to the MnmA/TRMU family.

The protein localises to the cytoplasm. The catalysed reaction is S-sulfanyl-L-cysteinyl-[protein] + uridine(34) in tRNA + AH2 + ATP = 2-thiouridine(34) in tRNA + L-cysteinyl-[protein] + A + AMP + diphosphate + H(+). In terms of biological role, catalyzes the 2-thiolation of uridine at the wobble position (U34) of tRNA, leading to the formation of s(2)U34. The chain is tRNA-specific 2-thiouridylase MnmA from Coxiella burnetii (strain CbuG_Q212) (Coxiella burnetii (strain Q212)).